A 195-amino-acid polypeptide reads, in one-letter code: Dynactin subunit 6 (195 aa).

The protein belongs to the dynactin subunits 5/6 family. Dynactin subunit 6 subfamily. Member of the pointed-end complex of the dynactin shoulder complex which contains dctn4, dctn5 and dctn6 subunits and Actr10. Within the complex dctn6 forms a heterodimer with dctn5. Interacts with plk1.

It is found in the cytoplasm. The protein resides in the cytoskeleton. It localises to the chromosome. Its subcellular location is the centromere. The protein localises to the kinetochore. Its function is as follows. Part of the dynactin complex that activates the molecular motor dynein for ultra-processive transport along microtubules. The chain is Dynactin subunit 6 (dctn6) from Danio rerio (Zebrafish).